Here is a 355-residue protein sequence, read N- to C-terminus: Anthranilate phosphoribosyltransferase (355 aa).

5-phospho-alpha-D-ribose 1-diphosphate contacts are provided by residues glycine 102, 105 to 106 (GD), serine 110, 112 to 115 (NIST), 130 to 138 (KHGNRSVSS), and serine 142. Glycine 102 is a binding site for anthranilate. Residue serine 114 participates in Mg(2+) binding. Anthranilate is bound at residue asparagine 133. Anthranilate is bound at residue arginine 188. Residues aspartate 246 and glutamate 247 each contribute to the Mg(2+) site.

It belongs to the anthranilate phosphoribosyltransferase family. As to quaternary structure, homodimer. The cofactor is Mg(2+).

The enzyme catalyses N-(5-phospho-beta-D-ribosyl)anthranilate + diphosphate = 5-phospho-alpha-D-ribose 1-diphosphate + anthranilate. The protein operates within amino-acid biosynthesis; L-tryptophan biosynthesis; L-tryptophan from chorismate: step 2/5. In terms of biological role, catalyzes the transfer of the phosphoribosyl group of 5-phosphorylribose-1-pyrophosphate (PRPP) to anthranilate to yield N-(5'-phosphoribosyl)-anthranilate (PRA). In Pectobacterium atrosepticum (strain SCRI 1043 / ATCC BAA-672) (Erwinia carotovora subsp. atroseptica), this protein is Anthranilate phosphoribosyltransferase.